The sequence spans 315 residues: Cobalamin biosynthesis protein CobD (315 aa).

The next 5 membrane-spanning stretches (helical) occupy residues 48–70, 75–94, 148–170, 208–230, and 292–314; these read IAGILTSCLVYLISFIIPFLSVQ, LHWILGELLSIMIIYTTIAI, LVDGITTPLFYAVFGGPAWAMLY, ITSYILVLSSLFLGYNFKNSLYI, and LILLSSILTFIFYILIYSGAAYF.

This sequence belongs to the CobD/CbiB family.

Its subcellular location is the cell membrane. Its pathway is cofactor biosynthesis; adenosylcobalamin biosynthesis. In terms of biological role, converts cobyric acid to cobinamide by the addition of aminopropanol on the F carboxylic group. This Leptospira interrogans serogroup Icterohaemorrhagiae serovar copenhageni (strain Fiocruz L1-130) protein is Cobalamin biosynthesis protein CobD.